The primary structure comprises 596 residues: CRISPR-associated DNA-binding protein Cas12m (596 aa).

The segment at Glu19–Tyr53 is recognition domain (REC1-N). Residues Pro54–Asp121 form a recognition domain (REC2) region. Coiled coils occupy residues Asp55–Glu83 and Thr91–Val117. The segment at Ala122 to Gly190 is recognition domain (REC1-C). The interval Thr191–Ile302 is wedge domain (WED). Positions Gly303 to Thr313 are linker. The segment at Val314–Ala541 is ruvC-I. Mg(2+) is bound at residue His317. Positions Ala541–Asp577 are target nucleic-acid binding (TNB). Residues His549, Cys552, Cys569, and Cys572 each contribute to the Zn(2+) site. Residues Gln578–Pro596 form a ruvC-II region. Residue Asp579 coordinates Mg(2+).

It belongs to the CRISPR-associated DNA-binding protein Cas12m family. Binds crRNA and target dsDNA as a monomer. Mg(2+) is required as a cofactor. Zn(2+) serves as cofactor.

In terms of biological role, CRISPR (clustered regularly interspaced short palindromic repeat), is an adaptive immune system that provides protection against mobile genetic elements (viruses, transposable elements and conjugative plasmids). CRISPR clusters contain sequences complementary to antecedent mobile elements and target invading nucleic acids. CRISPR clusters are transcribed and processed into CRISPR RNA (crRNA). Recognizes a short motif in the CRISPR repeat sequences (the 5' PAM or protospacer adjacent motif, 5'-TTN-3' in this organism) to help distinguish self versus nonself, as targets within the bacterial CRISPR locus do not have PAMs. Upon expression in E.coli as a CRISPR locus inhibits plasmid propagation when targeted to regions essential for plasmid propagation (replication origin and dnaA). The crRNA-Cas12m complex inhibits transcription from target DNA leading to gene silencing. Cas12m-crRNA binds DNA in a PAM-dependent, crRNA-guided fashion. Binds a 17-bp crRNA-ss-target DNA heteroduplex, in a 56 nucleotide crRNA. No dsDNA, ssDNA or RNA nuclease activity is seen for the crRNA-Cas12m complex. Is required to process pre-crRNA to mature crRNA without a tracrRNA. Upon expression in E.coli as a CRISPR region preferentially binds to its associated crRNA. This Mycolicibacterium mucogenicum (Mycobacterium mucogenicum) protein is CRISPR-associated DNA-binding protein Cas12m.